A 442-amino-acid chain; its full sequence is Glutamate--methylamine ligase (442 aa).

Residues 13–97 enclose the GS beta-grasp domain; sequence NQVKYILAQF…IACDGHTHGK (85 aa). Positions 103 to 442 constitute a GS catalytic domain; sequence TRVVLKKQLE…WEVNSYLEFF (340 aa).

It belongs to the glutamine synthetase family. Type 3 subfamily. Mg(2+) is required as a cofactor.

It carries out the reaction methylamine + L-glutamate + ATP = N(5)-methyl-L-glutamine + ADP + phosphate + H(+). Its function is as follows. Catalyzes the formation of N(5)-methyl-L-glutamine from glutamate and methylamine. The protein is Glutamate--methylamine ligase of Methyloversatilis universalis (strain ATCC BAA-1314 / DSM 25237 / JCM 13912 / CCUG 52030 / FAM5).